A 406-amino-acid chain; its full sequence is Sorting nexin-6 (406 aa).

Met1 carries the post-translational modification N-acetylmethionine. Met2 bears the N-acetylmethionine; in Sorting nexin-6, N-terminally processed mark. An interaction with PIM1 region spans residues 2–179; sequence MEGLDDGPDF…NQDLSVRGKN (178 aa). In terms of domain architecture, PX spans 26-173; that stretch reads LQSDAALQVD…HVFLEYNQDL (148 aa). Residues 41-47, 100-106, and 114-117 contribute to the a 1,2-diacyl-sn-glycero-3-phospho-(1D-myo-inositol-4,5-bisphosphate) site; these read SERDKVK, FDASREK, and EGSM. Phosphoserine occurs at positions 116 and 194. The tract at residues 182–199 is membrane-binding amphipathic helix; that stretch reads EKLEDFFKNMVKSADGVI. One can recognise a BAR domain in the interval 203–406; that stretch reads VKDVDDFFEH…NCLAVLNGDT (204 aa).

This sequence belongs to the sorting nexin family. Forms heterodimers with BAR domain-containing sorting nexins SNX1 and SNX2. The heterodimers are proposed to self-assemble into helical arrays on the membrane to stabilize and expand local membrane curvature underlying endosomal tubule formation. Thought to be a component of the originally described retromer complex (also called SNX-BAR retromer) which is a pentamer containing the heterotrimeric retromer cargo-selective complex (CSC), also described as vacuolar protein sorting subcomplex (VPS), and a heterodimeric membrane-deforming subcomplex formed between SNX1 or SNX2 and SNX5 or SNX6 (also called SNX-BAR subcomplex); the respective CSC and SNX-BAR subcomplexes associate with low affinity. Interacts with SNX1, SNX2, VPS26A, VPS29, VPS35, TGFB receptors, BACE1, BRMS1, PIP5K1C. Interacts with DCTN1; the association with DCTN1 is involved in movement of retromer-c ontaining vesicles toward the TGN. Interacts with PIM1; translocating SNX6 to the nucleus. Interacts with CDKN1B and GIT1. In terms of processing, in vitro phosphorylated by PIM1; not affecting PIM1-dependent nuclear translocation.

The protein localises to the early endosome membrane. The protein resides in the cytoplasmic vesicle. Its subcellular location is the cytoplasm. It is found in the nucleus. Functionally, involved in several stages of intracellular trafficking. Interacts with membranes phosphatidylinositol 3,4-bisphosphate and/or phosphatidylinositol 4,5-bisphosphate. Acts in part as component of the retromer membrane-deforming SNX-BAR subcomplex. The SNX-BAR retromer mediates retrograde transport of cargo proteins from endosomes to the trans-Golgi network (TGN) and is involved in endosome-to-plasma membrane transport for cargo protein recycling. The SNX-BAR subcomplex functions to deform the donor membrane into a tubular profile called endosome-to-TGN transport carrier (ETC). Does not have in vitro vesicle-to-membrane remodeling activity. Involved in retrograde endosome-to-TGN transport of lysosomal enzyme receptor IGF2R. May function as link between transport vesicles and dynactin. Negatively regulates retrograde transport of BACE1 from the cell surface to the trans-Golgi network. Involved in E-cadherin sorting and degradation; inhibits PIP5K1C-mediated E-cadherin degradation. In association with GIT1 involved in EGFR degradation. Promotes lysosomal degradation of CDKN1B. May contribute to transcription regulation. The polypeptide is Sorting nexin-6 (SNX6) (Pongo abelii (Sumatran orangutan)).